A 482-amino-acid polypeptide reads, in one-letter code: UDP-N-acetylmuramate--L-alanine ligase (482 aa).

123-129 serves as a coordination point for ATP; sequence GTHGKTT.

Belongs to the MurCDEF family.

It localises to the cytoplasm. It carries out the reaction UDP-N-acetyl-alpha-D-muramate + L-alanine + ATP = UDP-N-acetyl-alpha-D-muramoyl-L-alanine + ADP + phosphate + H(+). It participates in cell wall biogenesis; peptidoglycan biosynthesis. Its function is as follows. Cell wall formation. The chain is UDP-N-acetylmuramate--L-alanine ligase from Pseudomonas putida (strain ATCC 700007 / DSM 6899 / JCM 31910 / BCRC 17059 / LMG 24140 / F1).